The sequence spans 445 residues: MLDLRLIREHPDLVREALRKLNTEAPLDEILELDERRRQLVAEVEQLKAQRNAESKRIGQLPAGPEREATIAAMRALGDRIEALDRELAAIEERLQALLLEVPNLPDPDVPVGPDESGNVVVRHWGEPRPFDFPVKPHWELAEELGLIDFARGVKIAGSRFYVLRGDLARLQRALIAWMIDLHVNEHGYLEVYPPFLVRREAMIGTGNLPKFGDNLYHDEETDLWLIPTAEVPVTNLFRDEILPPGSLPIYLVAATPCFRKERVSAGRDVRGIKRVHQFEKVEMVKFVEPDRSDEELQRLVADAEDVLRRLELPYRVVQMCTGDLSFTAAKKFDLEVWAPGSQEWLEVSSCSNFRDFQARRANIRYRPSEGARPQFVHTLNGSGLALPRTLIAIMENYQQPDGTIEIPAVLRPYMGGQQRIGRQPAYWEPAQARRAREQARAGDS.

Residue T229–E231 participates in L-serine binding. ATP is bound by residues R260–E262 and V276. E283 lines the L-serine pocket. E347–S350 is a binding site for ATP. S383 provides a ligand contact to L-serine.

The protein belongs to the class-II aminoacyl-tRNA synthetase family. Type-1 seryl-tRNA synthetase subfamily. As to quaternary structure, homodimer. The tRNA molecule binds across the dimer.

Its subcellular location is the cytoplasm. The catalysed reaction is tRNA(Ser) + L-serine + ATP = L-seryl-tRNA(Ser) + AMP + diphosphate + H(+). The enzyme catalyses tRNA(Sec) + L-serine + ATP = L-seryl-tRNA(Sec) + AMP + diphosphate + H(+). Its pathway is aminoacyl-tRNA biosynthesis; selenocysteinyl-tRNA(Sec) biosynthesis; L-seryl-tRNA(Sec) from L-serine and tRNA(Sec): step 1/1. Its function is as follows. Catalyzes the attachment of serine to tRNA(Ser). Is also able to aminoacylate tRNA(Sec) with serine, to form the misacylated tRNA L-seryl-tRNA(Sec), which will be further converted into selenocysteinyl-tRNA(Sec). This is Serine--tRNA ligase from Thermomicrobium roseum (strain ATCC 27502 / DSM 5159 / P-2).